The sequence spans 326 residues: Vitamin B12 import system permease protein BtuC (326 aa).

9 helical membrane-spanning segments follow: residues 15 to 35, 61 to 81, 88 to 108, 112 to 132, 146 to 166, 184 to 204, 240 to 260, 274 to 294, and 302 to 322; these read WLLC…CAGE, LAVL…QALF, PGLL…VLLG, LPNW…TLIL, LLAG…AIYF, GGVD…LLWI, GWMV…GLVI, VLLP…DIVA, and ELPI…WLLL.

The protein belongs to the binding-protein-dependent transport system permease family. FecCD subfamily. The complex is composed of two ATP-binding proteins (BtuD), two transmembrane proteins (BtuC) and a solute-binding protein (BtuF).

Its subcellular location is the cell inner membrane. Part of the ABC transporter complex BtuCDF involved in vitamin B12 import. Involved in the translocation of the substrate across the membrane. The chain is Vitamin B12 import system permease protein BtuC from Escherichia coli O7:K1 (strain IAI39 / ExPEC).